The following is a 115-amino-acid chain: Large ribosomal subunit protein uL24 (115 aa).

The protein belongs to the universal ribosomal protein uL24 family. Part of the 50S ribosomal subunit.

In terms of biological role, one of two assembly initiator proteins, it binds directly to the 5'-end of the 23S rRNA, where it nucleates assembly of the 50S subunit. Its function is as follows. One of the proteins that surrounds the polypeptide exit tunnel on the outside of the subunit. In Deinococcus deserti (strain DSM 17065 / CIP 109153 / LMG 22923 / VCD115), this protein is Large ribosomal subunit protein uL24.